The chain runs to 542 residues: TOM1-like protein 7 (542 aa).

Residues 29-158 (ATSELLRTPD…ELKRCGVKFP (130 aa)) enclose the VHS domain. A Phosphoserine modification is found at serine 161. Residues 201–289 (EIESLSLSSL…VLARHDAIAS (89 aa)) enclose the GAT domain. The disordered stretch occupies residues 303-340 (RETSSSLKTCGAAALESADSESSSSSSSSESETDEVED). A compositionally biased stretch (low complexity) spans 314–332 (AAALESADSESSSSSSSSE). Serine 521 is modified (phosphoserine). Positions 522–542 (FPARATGTSGAATAATVDRQP) are disordered. Over residues 524–542 (ARATGTSGAATAATVDRQP) the composition is skewed to low complexity.

This sequence belongs to the TOM1 family. Preferentially expressed in flowers.

The protein resides in the membrane. Its function is as follows. Might contribute to the loading of the ESCRT machinery. In Arabidopsis thaliana (Mouse-ear cress), this protein is TOM1-like protein 7.